The following is a 250-amino-acid chain: Ribosomal RNA small subunit methyltransferase J (250 aa).

S-adenosyl-L-methionine is bound by residues 101 to 102 (RD), 117 to 118 (ER), 153 to 154 (SS), and Asp-171.

Belongs to the methyltransferase superfamily. RsmJ family.

It localises to the cytoplasm. It catalyses the reaction guanosine(1516) in 16S rRNA + S-adenosyl-L-methionine = N(2)-methylguanosine(1516) in 16S rRNA + S-adenosyl-L-homocysteine + H(+). In terms of biological role, specifically methylates the guanosine in position 1516 of 16S rRNA. The protein is Ribosomal RNA small subunit methyltransferase J of Escherichia coli O81 (strain ED1a).